A 528-amino-acid chain; its full sequence is Na(+)/H(+) antiporter NhaB (528 aa).

The next 11 membrane-spanning stretches (helical) occupy residues I10–I30, Y63–A83, V96–F116, V131–I165, L204–P224, F240–L260, V305–V325, L359–I379, L391–G411, A449–I469, and M476–E496.

It belongs to the NhaB Na(+)/H(+) (TC 2.A.34) antiporter family.

Its subcellular location is the cell inner membrane. It catalyses the reaction 2 Na(+)(in) + 3 H(+)(out) = 2 Na(+)(out) + 3 H(+)(in). Its function is as follows. Na(+)/H(+) antiporter that extrudes sodium in exchange for external protons. The sequence is that of Na(+)/H(+) antiporter NhaB from Shewanella putrefaciens (strain CN-32 / ATCC BAA-453).